The sequence spans 360 residues: Histidinol-phosphate aminotransferase (360 aa).

Residue Lys223 is modified to N6-(pyridoxal phosphate)lysine.

It belongs to the class-II pyridoxal-phosphate-dependent aminotransferase family. Histidinol-phosphate aminotransferase subfamily. Homodimer. It depends on pyridoxal 5'-phosphate as a cofactor.

The enzyme catalyses L-histidinol phosphate + 2-oxoglutarate = 3-(imidazol-4-yl)-2-oxopropyl phosphate + L-glutamate. Its pathway is amino-acid biosynthesis; L-histidine biosynthesis; L-histidine from 5-phospho-alpha-D-ribose 1-diphosphate: step 7/9. In Bacillus subtilis subsp. natto, this protein is Histidinol-phosphate aminotransferase.